The following is a 272-amino-acid chain: Hemin import ATP-binding protein HmuV (272 aa).

In terms of domain architecture, ABC transporter spans 2–255 (LNADHLHVAR…EPIARCYGFR (254 aa)). 34–41 (GRNGAGKS) is a binding site for ATP.

It belongs to the ABC transporter superfamily. Heme (hemin) importer (TC 3.A.1.14.5) family. In terms of assembly, the complex is composed of two ATP-binding proteins (HmuV), two transmembrane proteins (HmuU) and a solute-binding protein (HmuT).

It is found in the cell inner membrane. In terms of biological role, part of the ABC transporter complex HmuTUV involved in hemin import. Responsible for energy coupling to the transport system. The sequence is that of Hemin import ATP-binding protein HmuV from Burkholderia mallei (strain ATCC 23344).